The sequence spans 399 residues: Tryptophan synthase beta chain (399 aa).

At Lys-90 the chain carries N6-(pyridoxal phosphate)lysine.

This sequence belongs to the TrpB family. As to quaternary structure, tetramer of two alpha and two beta chains. Pyridoxal 5'-phosphate is required as a cofactor.

It carries out the reaction (1S,2R)-1-C-(indol-3-yl)glycerol 3-phosphate + L-serine = D-glyceraldehyde 3-phosphate + L-tryptophan + H2O. It participates in amino-acid biosynthesis; L-tryptophan biosynthesis; L-tryptophan from chorismate: step 5/5. Functionally, the beta subunit is responsible for the synthesis of L-tryptophan from indole and L-serine. In Phocaeicola vulgatus (strain ATCC 8482 / DSM 1447 / JCM 5826 / CCUG 4940 / NBRC 14291 / NCTC 11154) (Bacteroides vulgatus), this protein is Tryptophan synthase beta chain.